A 295-amino-acid chain; its full sequence is Glycine N-phenylacetyltransferase (295 aa).

K43 bears the N6-acetyllysine mark. K48 carries the post-translational modification N6-acetyllysine; alternate. At K48 the chain carries N6-succinyllysine; alternate. K80 is subject to N6-acetyllysine. K182 carries the N6-acetyllysine; alternate modification. At K182 the chain carries N6-succinyllysine; alternate.

Belongs to the glycine N-acyltransferase family.

It localises to the mitochondrion. It carries out the reaction phenylacetyl-CoA + glycine = phenylacetylglycine + CoA + H(+). Functionally, mitochondrial acyltransferase which transfers the acyl group to the N-terminus of glycine. Can conjugate a multitude of substrates to form a variety of N-acylglycines. Catalyzes the conjugation of arylacetic acids with glycine but does not have activity towards any alkyl-CoA. This chain is Glycine N-phenylacetyltransferase, found in Bos taurus (Bovine).